The chain runs to 385 residues: Transcription termination factor 2, mitochondrial (385 aa).

Residues 1–35 (MPWRLPTGHQLCRLCLLRKPRPALKIKPSSACVTY) constitute a mitochondrion transit peptide.

It belongs to the mTERF family. As to quaternary structure, monomer.

The protein resides in the mitochondrion matrix. It is found in the mitochondrion nucleoid. Functionally, binds mitochondrial DNA and plays a role in the regulation of transcription of mitochondrial mRNA and rRNA species. In Mus musculus (Mouse), this protein is Transcription termination factor 2, mitochondrial (Mterf2).